The primary structure comprises 448 residues: Adenylosuccinate synthetase (448 aa).

Residues 36-42 (GDEGKGK) and 64-66 (GHT) each bind GTP. The active-site Proton acceptor is the aspartate 37. Residues aspartate 37 and glycine 64 each contribute to the Mg(2+) site. IMP is bound by residues 37–40 (DEGK), 62–65 (NAGH), threonine 154, arginine 168, asparagine 246, threonine 261, and arginine 325. Histidine 65 acts as the Proton donor in catalysis. 321–327 (VTTKRKR) provides a ligand contact to substrate. GTP contacts are provided by residues arginine 327, 353–355 (KLD), and 436–438 (GVG).

The protein belongs to the adenylosuccinate synthetase family. Homodimer. Mg(2+) is required as a cofactor.

Its subcellular location is the cytoplasm. The enzyme catalyses IMP + L-aspartate + GTP = N(6)-(1,2-dicarboxyethyl)-AMP + GDP + phosphate + 2 H(+). It participates in purine metabolism; AMP biosynthesis via de novo pathway; AMP from IMP: step 1/2. In terms of biological role, plays an important role in the de novo pathway and in the salvage pathway of purine nucleotide biosynthesis. Catalyzes the first committed step in the biosynthesis of AMP from IMP. This chain is Adenylosuccinate synthetase, found in Drosophila mojavensis (Fruit fly).